The sequence spans 391 residues: tRNA (cytosine(38)-C(5))-methyltransferase (391 aa).

One can recognise an SAM-dependent MTase C5-type domain in the interval 4–391 (LRALELYSGI…VAKLIKILCD (388 aa)). S-adenosyl-L-methionine contacts are provided by residues 13–15 (IGG), D34, 57–58 (IE), and S76. C79 is a catalytic residue. An S-adenosyl-L-methionine-binding site is contributed by S376.

This sequence belongs to the class I-like SAM-binding methyltransferase superfamily. C5-methyltransferase family.

Its subcellular location is the cytoplasm. It carries out the reaction cytidine(38) in tRNA + S-adenosyl-L-methionine = 5-methylcytidine(38) in tRNA + S-adenosyl-L-homocysteine + H(+). Its function is as follows. Specifically methylates cytosine 38 in the anticodon loop of tRNA(Asp). Has higher activity on tRNA(Asp) modified with queuosine at position 34. This is tRNA (cytosine(38)-C(5))-methyltransferase (TRDMT1) from Bos taurus (Bovine).